The following is a 134-amino-acid chain: Small ribosomal subunit protein uS12 (134 aa).

The segment at 1–26 (MPTIQQLVRKGRESFADKSKSPALNS) is disordered. The span at 10 to 20 (KGRESFADKSK) shows a compositional bias: basic and acidic residues. At Asp89 the chain carries 3-methylthioaspartic acid. The disordered stretch occupies residues 103–134 (DTAGVNGRTQRRSKYGAKRPKPGQAPAAKGKK). The span at 111 to 123 (TQRRSKYGAKRPK) shows a compositional bias: basic residues. The span at 124–134 (PGQAPAAKGKK) shows a compositional bias: low complexity.

This sequence belongs to the universal ribosomal protein uS12 family. Part of the 30S ribosomal subunit. Contacts proteins S8 and S17. May interact with IF1 in the 30S initiation complex.

In terms of biological role, with S4 and S5 plays an important role in translational accuracy. Functionally, interacts with and stabilizes bases of the 16S rRNA that are involved in tRNA selection in the A site and with the mRNA backbone. Located at the interface of the 30S and 50S subunits, it traverses the body of the 30S subunit contacting proteins on the other side and probably holding the rRNA structure together. The combined cluster of proteins S8, S12 and S17 appears to hold together the shoulder and platform of the 30S subunit. The chain is Small ribosomal subunit protein uS12 from Porphyromonas gingivalis (strain ATCC BAA-308 / W83).